The primary structure comprises 101 residues: UPF0473 protein EF_1204 (101 aa).

It belongs to the UPF0473 family.

The sequence is that of UPF0473 protein EF_1204 from Enterococcus faecalis (strain ATCC 700802 / V583).